The following is a 239-amino-acid chain: Fatty acid metabolism regulator protein (239 aa).

The HTH gntR-type domain occupies 6-74 (QSPAGFAEEY…HGKPTKVNNF (69 aa)). A DNA-binding region (H-T-H motif) is located at residues 34 to 53 (ERELSELIGVTRTTLREVLQ).

Homodimer.

The protein resides in the cytoplasm. In terms of biological role, multifunctional regulator of fatty acid metabolism. This Yersinia enterocolitica serotype O:8 / biotype 1B (strain NCTC 13174 / 8081) protein is Fatty acid metabolism regulator protein.